The sequence spans 667 residues: DNA ligase (667 aa).

NAD(+) contacts are provided by residues 34-38 (DQEYD), 83-84 (SL), and glutamate 114. The active-site N6-AMP-lysine intermediate is lysine 116. The NAD(+) site is built by arginine 137, glutamate 170, lysine 286, and lysine 310. Positions 404, 407, 422, and 427 each coordinate Zn(2+). The BRCT domain maps to 588-667 (HLAQKFENYR…EFQQLLSKED (80 aa)).

The protein belongs to the NAD-dependent DNA ligase family. LigA subfamily. Mg(2+) serves as cofactor. It depends on Mn(2+) as a cofactor.

It carries out the reaction NAD(+) + (deoxyribonucleotide)n-3'-hydroxyl + 5'-phospho-(deoxyribonucleotide)m = (deoxyribonucleotide)n+m + AMP + beta-nicotinamide D-nucleotide.. DNA ligase that catalyzes the formation of phosphodiester linkages between 5'-phosphoryl and 3'-hydroxyl groups in double-stranded DNA using NAD as a coenzyme and as the energy source for the reaction. It is essential for DNA replication and repair of damaged DNA. The polypeptide is DNA ligase (Spiroplasma citri).